A 102-amino-acid chain; its full sequence is Large ribosomal subunit protein uL24 (102 aa).

This sequence belongs to the universal ribosomal protein uL24 family. In terms of assembly, part of the 50S ribosomal subunit.

Its function is as follows. One of two assembly initiator proteins, it binds directly to the 5'-end of the 23S rRNA, where it nucleates assembly of the 50S subunit. In terms of biological role, one of the proteins that surrounds the polypeptide exit tunnel on the outside of the subunit. The chain is Large ribosomal subunit protein uL24 from Limosilactobacillus reuteri (strain DSM 20016) (Lactobacillus reuteri).